We begin with the raw amino-acid sequence, 312 residues long: Fibrinogen-like protein 1 (312 aa).

A signal peptide spans 1 to 22; sequence MAKVFSFILVTTALTMGREISA. Residues 23–61 are a coiled coil; that stretch reads LEDCAQEQMRLRAQVRLLETRVKQQQVKIKQLLQENEVQ. Positions 74–306 constitute a Fibrinogen C-terminal domain; that stretch reads LGSKRQYADC…SVVMKIRPND (233 aa). 2 cysteine pairs are disulfide-bonded: Cys83–Cys112 and Cys248–Cys261.

As to quaternary structure, homodimer. Interacts (via the Fibrinogen C-terminal domain) with LAG3 (via Ig-like domains 1 and 2). As to expression, under normal conditions, liver-specific.

Its subcellular location is the secreted. Its function is as follows. Immune suppressive molecule that inhibits antigen-specific T-cell activation by acting as a major ligand of LAG3. Responsible for LAG3 T-cell inhibitory function. Binds LAG3 independently from MHC class II (MHC-II). Secreted by, and promotes growth of, hepatocytes. This chain is Fibrinogen-like protein 1, found in Homo sapiens (Human).